The chain runs to 33 residues: Omega-conotoxin-like Vn2 (33 aa).

Disulfide bonds link Cys3–Cys20, Cys10–Cys24, and Cys19–Cys28. Pro33 carries the post-translational modification Proline amide.

Expressed by the venom duct.

Its subcellular location is the secreted. Functionally, omega-conotoxins act at presynaptic membranes, they bind and block voltage-gated calcium channels (Cav). Has strong insecticidal properties at a dose of only 100 pmol/g of body weight (when injected into the haemocoel of the wax moth G.mellonella larvae). Provoques tremor and uncontrolled movements in insect larvae, that are typical symptoms caused by neurotoxins. On fish G.niger, intraperitoneal injection of the toxin causes full extension of the fins, change in posture, breathing difficulties (at 30 and 100 pmol/g body weight) and death (at 100 pmol/g body weight). The protein is Omega-conotoxin-like Vn2 of Conus ventricosus (Mediterranean cone).